We begin with the raw amino-acid sequence, 226 residues long: ATP synthase subunit a (226 aa).

5 helical membrane-spanning segments follow: residues 18–38, 74–94, 100–120, 158–180, and 197–217; these read LSLN…SYWL, FISL…PYIF, LTLT…YGWI, LAVR…GNTG, and IALL…FAVL.

It belongs to the ATPase A chain family. In terms of assembly, F-type ATPases have 2 components, CF(1) - the catalytic core - and CF(0) - the membrane proton channel. CF(1) has five subunits: alpha(3), beta(3), gamma(1), delta(1), epsilon(1). CF(0) has three main subunits: a, b and c.

It is found in the mitochondrion inner membrane. Functionally, mitochondrial membrane ATP synthase (F(1)F(0) ATP synthase or Complex V) produces ATP from ADP in the presence of a proton gradient across the membrane which is generated by electron transport complexes of the respiratory chain. F-type ATPases consist of two structural domains, F(1) - containing the extramembraneous catalytic core and F(0) - containing the membrane proton channel, linked together by a central stalk and a peripheral stalk. During catalysis, ATP synthesis in the catalytic domain of F(1) is coupled via a rotary mechanism of the central stalk subunits to proton translocation. Key component of the proton channel; it may play a direct role in the translocation of protons across the membrane. This chain is ATP synthase subunit a (mt:ATPase6), found in Anopheles gambiae (African malaria mosquito).